A 194-amino-acid chain; its full sequence is ATP-dependent Clp protease proteolytic subunit (194 aa).

Serine 97 (nucleophile) is an active-site residue. The active site involves histidine 122.

This sequence belongs to the peptidase S14 family. In terms of assembly, fourteen ClpP subunits assemble into 2 heptameric rings which stack back to back to give a disk-like structure with a central cavity, resembling the structure of eukaryotic proteasomes.

Its subcellular location is the cytoplasm. The enzyme catalyses Hydrolysis of proteins to small peptides in the presence of ATP and magnesium. alpha-casein is the usual test substrate. In the absence of ATP, only oligopeptides shorter than five residues are hydrolyzed (such as succinyl-Leu-Tyr-|-NHMec, and Leu-Tyr-Leu-|-Tyr-Trp, in which cleavage of the -Tyr-|-Leu- and -Tyr-|-Trp bonds also occurs).. Functionally, cleaves peptides in various proteins in a process that requires ATP hydrolysis. Has a chymotrypsin-like activity. Plays a major role in the degradation of misfolded proteins. The protein is ATP-dependent Clp protease proteolytic subunit of Campylobacter jejuni subsp. jejuni serotype O:6 (strain 81116 / NCTC 11828).